A 351-amino-acid polypeptide reads, in one-letter code: Phospho-N-acetylmuramoyl-pentapeptide-transferase (351 aa).

The next 10 membrane-spanning stretches (helical) occupy residues 17-37 (MAYA…HIIL), 62-82 (GIPT…LVFW), 85-105 (ILNV…FLGF), 124-144 (FKIY…YYFG), 161-181 (IDLG…ASNS), 190-210 (GLAI…AYLT), 230-250 (LVIF…FNAY), 254-274 (IMMG…AALI), 279-299 (ILFS…IIQV), and 328-348 (QVVI…LSTI).

The protein belongs to the glycosyltransferase 4 family. MraY subfamily. Mg(2+) serves as cofactor.

The protein resides in the cell inner membrane. The catalysed reaction is UDP-N-acetyl-alpha-D-muramoyl-L-alanyl-gamma-D-glutamyl-meso-2,6-diaminopimeloyl-D-alanyl-D-alanine + di-trans,octa-cis-undecaprenyl phosphate = di-trans,octa-cis-undecaprenyl diphospho-N-acetyl-alpha-D-muramoyl-L-alanyl-D-glutamyl-meso-2,6-diaminopimeloyl-D-alanyl-D-alanine + UMP. It participates in cell wall biogenesis; peptidoglycan biosynthesis. Its function is as follows. Catalyzes the initial step of the lipid cycle reactions in the biosynthesis of the cell wall peptidoglycan: transfers peptidoglycan precursor phospho-MurNAc-pentapeptide from UDP-MurNAc-pentapeptide onto the lipid carrier undecaprenyl phosphate, yielding undecaprenyl-pyrophosphoryl-MurNAc-pentapeptide, known as lipid I. The sequence is that of Phospho-N-acetylmuramoyl-pentapeptide-transferase from Borrelia garinii subsp. bavariensis (strain ATCC BAA-2496 / DSM 23469 / PBi) (Borreliella bavariensis).